The following is a 329-amino-acid chain: MKAAITATAKYLPQSVLSNHDLEQMLETNDEWIRSRTGIGERRIMNDPSKATAYMCGEVALQLLEARKMKPEEIEVIIVATMTPDMLFPATACFVQGIIGATNAWAFDINAACSGFLFALSTASRLIESGAHKKVMVIGGDKMSSVIDYTNRSTAILFGDGAAGVILEPSTNDNYGILDARLYSDGASGTSHLLMAAGGSLNPATHETVDKRMHFLHQDGKQVFKSAVTSMADVAAEIMTRNNLSAEDISFLVPHQANQRIINATAERMGLDQEKVYSNVARYGNTTAGTIPICLAELNEQEQLKTGSNLVLVSFGAGYTWGGIYIKWQ.

Active-site residues include Cys-113 and His-255. The ACP-binding stretch occupies residues 256–260 (QANQR). Residue Asn-285 is part of the active site.

It belongs to the thiolase-like superfamily. FabH family. As to quaternary structure, homodimer.

It is found in the cytoplasm. It carries out the reaction malonyl-[ACP] + acetyl-CoA + H(+) = 3-oxobutanoyl-[ACP] + CO2 + CoA. The protein operates within lipid metabolism; fatty acid biosynthesis. Its function is as follows. Catalyzes the condensation reaction of fatty acid synthesis by the addition to an acyl acceptor of two carbons from malonyl-ACP. Catalyzes the first condensation reaction which initiates fatty acid synthesis and may therefore play a role in governing the total rate of fatty acid production. Possesses both acetoacetyl-ACP synthase and acetyl transacylase activities. Its substrate specificity determines the biosynthesis of branched-chain and/or straight-chain of fatty acids. The chain is Beta-ketoacyl-[acyl-carrier-protein] synthase III from Chlorobium phaeobacteroides (strain DSM 266 / SMG 266 / 2430).